Reading from the N-terminus, the 360-residue chain is Glutamate 5-kinase (360 aa).

Residue Lys11 participates in ATP binding. Substrate-binding residues include Ser51, Asp138, and Asn150. The PUA domain maps to 278–356 (KGEIHINECA…GKKPVVHYDY (79 aa)).

This sequence belongs to the glutamate 5-kinase family.

Its subcellular location is the cytoplasm. It carries out the reaction L-glutamate + ATP = L-glutamyl 5-phosphate + ADP. It participates in amino-acid biosynthesis; L-proline biosynthesis; L-glutamate 5-semialdehyde from L-glutamate: step 1/2. In terms of biological role, catalyzes the transfer of a phosphate group to glutamate to form L-glutamate 5-phosphate. This Bacteroides thetaiotaomicron (strain ATCC 29148 / DSM 2079 / JCM 5827 / CCUG 10774 / NCTC 10582 / VPI-5482 / E50) protein is Glutamate 5-kinase.